Here is a 520-residue protein sequence, read N- to C-terminus: Aspartate-proton symporter (520 aa).

The next 14 membrane-spanning stretches (helical) occupy residues 13 to 33 (LFDL…LFAV), 49 to 69 (ILGG…GAAL), 85 to 105 (HLVG…LISI), 130 to 150 (TISG…LNYW), 161 to 181 (IISI…IFHF), 201 to 221 (AAIS…IVSV), 232 to 252 (IPIA…VLQV), 281 to 301 (IAVM…AILS), 345 to 365 (WLSF…NALV), 366 to 386 (NVCS…SAAL), 402 to 422 (MSII…WSGW), 425 to 445 (VSWL…FSKY), 460 to 480 (AWWL…GSFG), and 482 to 502 (GLGI…SLAI).

It belongs to the amino acid-polyamine-organocation (APC) superfamily. AGT (TC 2.A.3.11) family.

It localises to the cell membrane. Uptake of L-aspartate with the concomitant import of a proton. Can also transport aspartate hydroxamate and L-glutamate with lower affinity and efficiency. This Bacillus subtilis (strain 168) protein is Aspartate-proton symporter (yveA).